A 253-amino-acid chain; its full sequence is Dof zinc finger protein DOF3.4 (253 aa).

The Dof-type zinc finger occupies 30–84 (LPCPRCDSSNTKFCYYNNYNFSQPRHFCKACRRYWTHGGTLRDVPVGGGTRKSAK). Cys32, Cys35, Cys57, and Cys60 together coordinate Zn(2+). The interval 73-103 (VPVGGGTRKSAKRSRTCSNSSSSSVSGVVSN) is disordered. A compositionally biased stretch (low complexity) spans 90–103 (SNSSSSSVSGVVSN).

As to quaternary structure, interacts with OBF4 or OBF5. In terms of tissue distribution, constitutively expressed in the whole plant.

The protein resides in the nucleus. Functionally, transcription factor that binds specifically to a 5'-AA[AG]G-3' consensus core sequence. Enhances the DNA binding of OBF transcription factors to OCS elements. This is Dof zinc finger protein DOF3.4 (DOF3.4) from Arabidopsis thaliana (Mouse-ear cress).